Here is a 323-residue protein sequence, read N- to C-terminus: 2-methylene-furan-3-one reductase (323 aa).

Residues lysine 59, 174–175 (GV), 197–200 (STKK), tyrosine 216, isoleucine 254, 265–267 (FVL), and 312–313 (RA) each bind NADP(+). Lysine 59 serves as a coordination point for substrate.

It belongs to the zinc-containing alcohol dehydrogenase family. Quinone oxidoreductase subfamily. Monomer. The N-terminus is blocked. In terms of tissue distribution, expressed in parenchyma tissues of red fruits. Not found in vascular tissues. Also detected in the achenes.

It carries out the reaction 4-hydroxy-2,5-dimethyl-furan-3(2H)-one + NADP(+) = 4-hydroxy-5-methyl-2-methylenefuran-3(2H)-one + NADPH + H(+). Enone oxidoreductase involved in the biosynthesis of 4-hydroxy-2,5-dimethyl-3(2H)-furanone (HDMF or furaneol), the key flavor compound in strawberries. Can use both NADH and NADPH as the electron donor. The sequence is that of 2-methylene-furan-3-one reductase (EO) from Fragaria ananassa (Strawberry).